A 1786-amino-acid chain; its full sequence is Laminin subunit beta-1 (1786 aa).

Positions 1–21 (MGLLQVFAFGVLALWGTRVCA) are cleaved as a signal peptide. In terms of domain architecture, Laminin N-terminal spans 31 to 270 (AEGSCYPATG…AVYDMVVRGN (240 aa)). An N-linked (GlcNAc...) asparagine glycan is attached at asparagine 120. Position 250 is a phosphoserine (serine 250). 19 disulfide bridges follow: cysteine 271–cysteine 280, cysteine 273–cysteine 298, cysteine 300–cysteine 309, cysteine 312–cysteine 332, cysteine 335–cysteine 344, cysteine 337–cysteine 362, cysteine 365–cysteine 374, cysteine 377–cysteine 395, cysteine 398–cysteine 411, cysteine 400–cysteine 426, cysteine 428–cysteine 437, cysteine 440–cysteine 455, cysteine 458–cysteine 472, cysteine 460–cysteine 479, cysteine 481–cysteine 490, cysteine 493–cysteine 507, cysteine 510–cysteine 522, cysteine 512–cysteine 529, and cysteine 531–cysteine 540. 4 consecutive Laminin EGF-like domains span residues 271 to 334 (CFCY…ACKK), 335 to 397 (CNCN…LCEP), 398 to 457 (CTCD…GCKS), and 458 to 509 (CACN…GCRP). Asparagine 356 is a glycosylation site (N-linked (GlcNAc...) asparagine). One can recognise a Laminin EGF-like 5; truncated domain in the interval 510–540 (CDCDLGGALNNSCSEDSGQCSCLPHMIGRQC). N-linked (GlcNAc...) asparagine glycosylation is present at asparagine 519. Residues 549–767 (FTTLDHYIYE…IIFSISALIH (219 aa)) enclose the Laminin IV type B domain. N-linked (GlcNAc...) asparagine glycosylation is present at asparagine 677. Disulfide bonds link cysteine 773–cysteine 785, cysteine 775–cysteine 792, cysteine 794–cysteine 803, cysteine 806–cysteine 818, cysteine 821–cysteine 833, cysteine 823–cysteine 840, cysteine 842–cysteine 851, cysteine 854–cysteine 864, cysteine 867–cysteine 876, cysteine 869–cysteine 883, cysteine 886–cysteine 895, cysteine 898–cysteine 914, cysteine 917–cysteine 933, cysteine 919–cysteine 944, cysteine 946–cysteine 955, cysteine 958–cysteine 973, cysteine 976–cysteine 990, cysteine 978–cysteine 997, cysteine 1000–cysteine 1009, cysteine 1012–cysteine 1025, cysteine 1028–cysteine 1040, cysteine 1030–cysteine 1054, cysteine 1056–cysteine 1065, cysteine 1068–cysteine 1081, cysteine 1084–cysteine 1096, cysteine 1086–cysteine 1103, cysteine 1105–cysteine 1114, cysteine 1117–cysteine 1129, cysteine 1132–cysteine 1144, cysteine 1134–cysteine 1151, cysteine 1153–cysteine 1162, and cysteine 1165–cysteine 1176. 8 consecutive Laminin EGF-like domains span residues 773-820 (CECD…GCKP), 821-866 (CDCH…SCQP), 867-916 (CQCN…HCRP), 917-975 (CPCP…SCQP), 976-1027 (CQCH…DCRK), 1028-1083 (CVCN…GCGP), 1084-1131 (CNCN…ECRA), and 1132-1178 (CDCD…DCTP). An N-linked (GlcNAc...) asparagine glycan is attached at asparagine 1041. A domain II region spans residues 1179–1397 (CHQCFALWDA…LDLSAVAQMT (219 aa)). Asparagine 1195, asparagine 1279, asparagine 1336, and asparagine 1343 each carry an N-linked (GlcNAc...) asparagine glycan. Positions 1216 to 1315 (YRETVDSVEK…LEFIKNSDIQ (100 aa)) form a coiled coil. The stretch at 1368 to 1388 (KEQQEEQARLLDELAGKLQSL) forms a coiled coil. The domain alpha stretch occupies residues 1398–1430 (CGTPPGADCSESECGGPNCRTDEGEKKCGGPGC). The interval 1431-1786 (GGLVTVAHSA…EKVAVYSTCL (356 aa)) is domain I. A coiled-coil region spans residues 1448 to 1778 (DRDVLSALAE…RSLLKDISEK (331 aa)). N-linked (GlcNAc...) asparagine glycosylation is present at asparagine 1487. Residue serine 1496 is modified to Phosphoserine. N-linked (GlcNAc...) asparagine glycans are attached at residues asparagine 1542 and asparagine 1643. The residue at position 1666 (serine 1666) is a Phosphoserine.

Laminin is a complex glycoprotein, consisting of three different polypeptide chains (alpha, beta, gamma), which are bound to each other by disulfide bonds into a cross-shaped molecule comprising one long and three short arms with globules at each end. Beta-1 is a subunit of laminin-1 (laminin-111 or EHS laminin), laminin-2 (laminin-211 or merosin), laminin-6 (laminin-311 or K-laminin), laminin-8 (laminin-411), laminin-10 (laminin-511) and laminin-12 (laminin-213). Interacts with ITGB1. As to expression, widely expressed in the embryo. High levels are detected in the cerebellar basement membrane, at postnatal day 7.

The protein localises to the secreted. It is found in the extracellular space. It localises to the extracellular matrix. The protein resides in the basement membrane. Binding to cells via a high affinity receptor, laminin is thought to mediate the attachment, migration and organization of cells into tissues during embryonic development by interacting with other extracellular matrix components. Involved in the organization of the laminar architecture of the cerebral cortex. It is probably required for the integrity of the basement membrane/glia limitans that serves as an anchor point for the endfeet of radial glial cells and as a physical barrier to migrating neurons. Radial glial cells play a central role in cerebral cortical development, where they act both as the proliferative unit of the cerebral cortex and a scaffold for neurons migrating toward the pial surface. In Mus musculus (Mouse), this protein is Laminin subunit beta-1 (Lamb1).